Here is a 514-residue protein sequence, read N- to C-terminus: 2,3-bisphosphoglycerate-independent phosphoglycerate mutase (514 aa).

Asp-13 and Ser-63 together coordinate Mn(2+). The active-site Phosphoserine intermediate is the Ser-63. Residues His-124, 154–155 (RD), Arg-186, Arg-192, 258–261 (RADR), and Lys-332 each bind substrate. 5 residues coordinate Mn(2+): Asp-399, His-403, Asp-440, His-441, and His-459.

This sequence belongs to the BPG-independent phosphoglycerate mutase family. In terms of assembly, monomer. Requires Mn(2+) as cofactor.

The catalysed reaction is (2R)-2-phosphoglycerate = (2R)-3-phosphoglycerate. It participates in carbohydrate degradation; glycolysis; pyruvate from D-glyceraldehyde 3-phosphate: step 3/5. Functionally, catalyzes the interconversion of 2-phosphoglycerate and 3-phosphoglycerate. In Legionella pneumophila (strain Corby), this protein is 2,3-bisphosphoglycerate-independent phosphoglycerate mutase.